Consider the following 255-residue polypeptide: tRNA (guanine-N(1)-)-methyltransferase (255 aa).

Residues G113 and 133-138 (IGDYVL) each bind S-adenosyl-L-methionine.

This sequence belongs to the RNA methyltransferase TrmD family. As to quaternary structure, homodimer.

It is found in the cytoplasm. It carries out the reaction guanosine(37) in tRNA + S-adenosyl-L-methionine = N(1)-methylguanosine(37) in tRNA + S-adenosyl-L-homocysteine + H(+). In terms of biological role, specifically methylates guanosine-37 in various tRNAs. The polypeptide is tRNA (guanine-N(1)-)-methyltransferase (Klebsiella pneumoniae (strain 342)).